Here is a 144-residue protein sequence, read N- to C-terminus: Ribosomal RNA large subunit methyltransferase H (144 aa).

S-adenosyl-L-methionine contacts are provided by residues leucine 63, glycine 92, and 111–116; that span reads LSAMTL.

Belongs to the RNA methyltransferase RlmH family. As to quaternary structure, homodimer.

It localises to the cytoplasm. It carries out the reaction pseudouridine(1915) in 23S rRNA + S-adenosyl-L-methionine = N(3)-methylpseudouridine(1915) in 23S rRNA + S-adenosyl-L-homocysteine + H(+). Its function is as follows. Specifically methylates the pseudouridine at position 1915 (m3Psi1915) in 23S rRNA. This chain is Ribosomal RNA large subunit methyltransferase H, found in Prochlorococcus marinus (strain MIT 9313).